Consider the following 257-residue polypeptide: uncharacterized protein (257 aa).

A helical transmembrane segment spans residues 6–26; the sequence is IFWLNLAAIIIISIVVSGGMF.

Belongs to the staphylococcal tandem lipoprotein family.

It localises to the cell membrane. This is an uncharacterized protein from Staphylococcus aureus (strain MSSA476).